A 238-amino-acid chain; its full sequence is Protein FEV (238 aa).

A DNA-binding region (ETS) is located at residues 47-127 (IQLWQFLLEL…HGKRYAYRFD (81 aa)). Residues 129–238 (QGLAQACQPP…AASHLGGHYH (110 aa)) are may mediate active transcriptional repression.

This sequence belongs to the ETS family. As to expression, in brain, exclusively expressed in the major serotonergic neurons of the dorsal and median raphe nuclei located in the midbrain and pons. Also detected in prostate and small intestine.

Its subcellular location is the nucleus. Functions as a transcriptional regulator. According to PubMed:12761502, it functions as a transcriptional repressor. Functions in the differentiation and the maintenance of the central serotonergic neurons. May play a role in cell growth. The sequence is that of Protein FEV (FEV) from Homo sapiens (Human).